The sequence spans 396 residues: ATP-dependent RNA helicase eIF4A (396 aa).

The short motif at 23–51 (YEFDDMNLNEKLLRGVFGYGFNKPSAIQQ) is the Q motif element. The region spanning 54 to 223 (IMPIIEGNDV…AKFMQNPVRI (170 aa)) is the Helicase ATP-binding domain. Residue 67–74 (AQSGTGKT) coordinates ATP. A DEAD box motif is present at residues 171–174 (DEAD). Residues 234 to 395 (GIKQFYVNVE…ELPSDIGTLF (162 aa)) enclose the Helicase C-terminal domain.

This sequence belongs to the DEAD box helicase family. eIF4A subfamily. In terms of assembly, component of the eIF4F complex, which composition varies with external and internal environmental conditions. It is composed of at least eIF4A, eIF4E and eIF4G.

The protein localises to the cytoplasm. The catalysed reaction is ATP + H2O = ADP + phosphate + H(+). Functionally, ATP-dependent RNA helicase which is a subunit of the eIF4F complex involved in cap recognition and is required for mRNA binding to ribosome. In the current model of translation initiation, eIF4A unwinds RNA secondary structures in the 5'-UTR of mRNAs which is necessary to allow efficient binding of the small ribosomal subunit, and subsequent scanning for the initiator codon. This Candida glabrata (strain ATCC 2001 / BCRC 20586 / JCM 3761 / NBRC 0622 / NRRL Y-65 / CBS 138) (Yeast) protein is ATP-dependent RNA helicase eIF4A (TIF1).